A 515-amino-acid polypeptide reads, in one-letter code: Organic cation/carnitine transporter 5 (515 aa).

Topologically, residues Met-1–Gln-43 are cytoplasmic. Residues Ile-44–Thr-64 form a helical membrane-spanning segment. Residues Asp-65–Thr-124 are Extracellular-facing. Residues Phe-125–Gly-145 form a helical membrane-spanning segment. Residues Arg-146 to Leu-149 are Cytoplasmic-facing. A helical transmembrane segment spans residues Leu-150–Ile-172. At Tyr-173–Lys-177 the chain is on the extracellular side. A helical transmembrane segment spans residues Phe-178–Ile-195. An ATP-binding site is contributed by Ile-195 to Lys-202. The Cytoplasmic segment spans residues Ser-196–Thr-208. Residues Met-209–Val-229 form a helical membrane-spanning segment. Residues Arg-230–Lys-235 are Extracellular-facing. The chain crosses the membrane as a helical span at residues Val-236–Ala-256. The Cytoplasmic portion of the chain corresponds to Leu-257–Arg-320. The chain crosses the membrane as a helical span at residues Val-321–Ala-341. Over Val-342 to Tyr-350 the chain is Extracellular. The chain crosses the membrane as a helical span at residues Met-351–Leu-371. Topologically, residues Glu-372–Ser-379 are cytoplasmic. The helical transmembrane segment at Val-380 to Tyr-400 threads the bilayer. Residues Gly-401–Leu-411 lie on the Extracellular side of the membrane. The helical transmembrane segment at Gly-412–Phe-432 threads the bilayer. Residues Pro-433–Thr-441 lie on the Cytoplasmic side of the membrane. A helical transmembrane segment spans residues Met-442–Gly-462. The Extracellular segment spans residues Arg-463–Ser-467. Residues Leu-468–Pro-488 traverse the membrane as a helical segment. At Glu-489–Cys-515 the chain is on the cytoplasmic side.

This sequence belongs to the major facilitator (TC 2.A.1) superfamily. Organic cation transporter (TC 2.A.1.19) family. In terms of tissue distribution, mostly expressed in leaves and siliques, and, to a lower extent, in roots, stems and flowers.

It is found in the vacuole membrane. High affinity carnitine transporter involved in the active cellular uptake of carnitine. Also transports organic cations. The sequence is that of Organic cation/carnitine transporter 5 (OCT5) from Arabidopsis thaliana (Mouse-ear cress).